A 283-amino-acid chain; its full sequence is Protein boule-like (283 aa).

Residues 1 to 25 form a disordered region; that stretch reads MQTDSLSPSPNPVSPVPLNNPTSAP. An RRM domain is found at 33–110; that stretch reads NRIFVGGIDF…KKLNIGPAIR (78 aa). The DAZ domain maps to 160 to 184; it reads PSRSVCSSPVMVAQPIYQQPAYHYQ.

It belongs to the RRM DAZ family. In terms of assembly, interacts with DAZ1 and DAZL. In terms of tissue distribution, testis specific. Not expressed in early embryos, primordial germ cells and spermatogonial cells. First expressed in the cytoplasm of spermatocytes and then persists through meiosis.

The protein localises to the cytoplasm. Functionally, probable RNA-binding protein, which may be required during spermatogenesis. May act by binding to the 3'-UTR of mRNAs and regulating their translation. The protein is Protein boule-like (BOLL) of Homo sapiens (Human).